We begin with the raw amino-acid sequence, 246 residues long: 5'-nucleotidase SurE (246 aa).

4 residues coordinate a divalent metal cation: Asp8, Asp9, Ser39, and Asn91.

Belongs to the SurE nucleotidase family. A divalent metal cation is required as a cofactor.

It localises to the cytoplasm. The enzyme catalyses a ribonucleoside 5'-phosphate + H2O = a ribonucleoside + phosphate. Functionally, nucleotidase that shows phosphatase activity on nucleoside 5'-monophosphates. The sequence is that of 5'-nucleotidase SurE from Mannheimia succiniciproducens (strain KCTC 0769BP / MBEL55E).